The following is a 949-amino-acid chain: Translation initiation factor IF-2 (949 aa).

Disordered regions lie at residues 61 to 122 (IQAN…PIIK), 139 to 159 (VENT…QKLQ), and 171 to 284 (LTQS…NKSH). Composition is skewed to basic and acidic residues over residues 112 to 122 (KKKEAPAPIIK) and 150 to 159 (QIEKAKQKLQ). A compositionally biased stretch (low complexity) spans 174-190 (SNTNTTNNANSASNVSN). Residues 191–208 (AKKEISEVKKQEQEIKRH) are compositionally biased toward basic and acidic residues. The span at 209-220 (ENIKRRTGFRVI) shows a compositional bias: basic residues. Over residues 249–264 (EDIKKEWQEKDKQETK) the composition is skewed to basic and acidic residues. One can recognise a tr-type G domain in the interval 448–617 (ERPPVVTIMG…LIQADIMELK (170 aa)). A G1 region spans residues 457–464 (GHVDHGKT). GTP is bound at residue 457–464 (GHVDHGKT). Residues 482-486 (GITQH) are G2. The tract at residues 503–506 (DTPG) is G3. GTP contacts are provided by residues 503 to 507 (DTPGH) and 557 to 560 (NKMD). A G4 region spans residues 557 to 560 (NKMD). Residues 593–595 (SAK) are G5.

Belongs to the TRAFAC class translation factor GTPase superfamily. Classic translation factor GTPase family. IF-2 subfamily.

Its subcellular location is the cytoplasm. In terms of biological role, one of the essential components for the initiation of protein synthesis. Protects formylmethionyl-tRNA from spontaneous hydrolysis and promotes its binding to the 30S ribosomal subunits. Also involved in the hydrolysis of GTP during the formation of the 70S ribosomal complex. The polypeptide is Translation initiation factor IF-2 (infB) (Helicobacter pylori (strain J99 / ATCC 700824) (Campylobacter pylori J99)).